The following is a 984-amino-acid chain: Putative formate dehydrogenase SAB2186c (984 aa).

In terms of domain architecture, 2Fe-2S ferredoxin-type spans 3–79 (EHLVVTLDGK…PMTVNTVNND (77 aa)). Residues Cys37, Cys48, Cys51, and Cys63 each coordinate [2Fe-2S] cluster. The 4Fe-4S His(Cys)3-ligated-type domain occupies 79–119 (DVKDAQKEALDRILEKHMLYCTVCDYNNGDCEIHNTMDAWG). His95, Cys99, Cys102, Cys109, Cys147, Cys150, Cys153, Cys157, Cys190, Cys193, Cys196, Cys200, Cys264, Cys267, Cys271, and Cys299 together coordinate [4Fe-4S] cluster. 4Fe-4S ferredoxin-type domains follow at residues 138–165 (PFYR…VNET) and 181–211 (NDVP…VNME). The segment at 252–984 (MRKERIKKTK…YVFPGNQVDK (733 aa)) is formate dehydrogenase. The 57-residue stretch at 257–313 (IKKTKTVCTYCGVGCSFEVWTKDREILKVQPSHDSPANKIATCVKGKFSWGHINSDQ) folds into the 4Fe-4S Mo/W bis-MGD-type domain.

It in the C-terminal section; belongs to the prokaryotic molybdopterin-containing oxidoreductase family. [2Fe-2S] cluster serves as cofactor. [4Fe-4S] cluster is required as a cofactor. It depends on Mo-bis(molybdopterin guanine dinucleotide) as a cofactor.

The catalysed reaction is formate + NAD(+) = CO2 + NADH. This is Putative formate dehydrogenase SAB2186c from Staphylococcus aureus (strain bovine RF122 / ET3-1).